The following is a 260-amino-acid chain: 3'-5' ssDNA/RNA exonuclease TatD (260 aa).

Residues Glu92, His128, and His153 each contribute to the a divalent metal cation site.

The protein belongs to the metallo-dependent hydrolases superfamily. TatD-type hydrolase family. TatD subfamily. In terms of assembly, monomer. Requires Mg(2+) as cofactor.

It localises to the cytoplasm. Its function is as follows. 3'-5' exonuclease that prefers single-stranded DNA and RNA. May play a role in the H(2)O(2)-induced DNA damage repair. The protein is 3'-5' ssDNA/RNA exonuclease TatD of Pantoea ananatis (strain LMG 20103).